A 388-amino-acid chain; its full sequence is MVGTPLFSNAKKILLLGSGELGKEVIIEAQRFGVECIAVDSYENAPAMQVAHKYHIIDMKDAGALRAVIEKEKPDLIVPEIEAINTDTLKEMESEGYHVVPTANATKLTMDREGIRRLAFEKLGLRTAKYEFAENLEELKEAVTRIGIPCIIKPIMSSSGKGQSTIKSESDIKTAWNYAKSAARGIGTKVIVEEFIKFDYEITLLTARTAEGTRFCEPIGHIQVDGDYHESWQPHPMCAPTKAKAQEMAKKITDELGGYGIFGVELFVLDDEVIFSEVSPRPHDTGMVTMVTQKMSEFEIHARAILGLPVNVDIVSPGASHVIKSEILKWAPEYEIHEASKVKDTKIRLFGKPIAKVGRRMGVALAVSDDVIKAREHAEKVAHLVKIK.

N(1)-(5-phospho-beta-D-ribosyl)glycinamide is bound by residues 20–21 (EL) and glutamate 80. ATP-binding positions include arginine 112, lysine 153, 158–163 (SSGKGQ), 193–196 (EEFI), and glutamate 201. One can recognise an ATP-grasp domain in the interval 117–306 (RLAFEKLGLR…EFEIHARAIL (190 aa)). Mg(2+) is bound by residues glutamate 265 and glutamate 277. N(1)-(5-phospho-beta-D-ribosyl)glycinamide contacts are provided by residues aspartate 284, lysine 352, and 359–360 (RR).

This sequence belongs to the PurK/PurT family. Homodimer.

It catalyses the reaction N(1)-(5-phospho-beta-D-ribosyl)glycinamide + formate + ATP = N(2)-formyl-N(1)-(5-phospho-beta-D-ribosyl)glycinamide + ADP + phosphate + H(+). Its pathway is purine metabolism; IMP biosynthesis via de novo pathway; N(2)-formyl-N(1)-(5-phospho-D-ribosyl)glycinamide from N(1)-(5-phospho-D-ribosyl)glycinamide (formate route): step 1/1. Functionally, involved in the de novo purine biosynthesis. Catalyzes the transfer of formate to 5-phospho-ribosyl-glycinamide (GAR), producing 5-phospho-ribosyl-N-formylglycinamide (FGAR). Formate is provided by PurU via hydrolysis of 10-formyl-tetrahydrofolate. This Methanococcus maripaludis (strain DSM 14266 / JCM 13030 / NBRC 101832 / S2 / LL) protein is Formate-dependent phosphoribosylglycinamide formyltransferase.